We begin with the raw amino-acid sequence, 225 residues long: UPF0173 metal-dependent hydrolase PYRAB05000 (225 aa).

The protein belongs to the UPF0173 family.

The protein is UPF0173 metal-dependent hydrolase PYRAB05000 of Pyrococcus abyssi (strain GE5 / Orsay).